Here is a 128-residue protein sequence, read N- to C-terminus: uncharacterized protein (128 aa).

This is an uncharacterized protein from Mycobacterium tuberculosis (strain CDC 1551 / Oshkosh).